We begin with the raw amino-acid sequence, 348 residues long: MO25-like protein At2g03410 (348 aa).

Belongs to the Mo25 family.

The protein is MO25-like protein At2g03410 of Arabidopsis thaliana (Mouse-ear cress).